Reading from the N-terminus, the 273-residue chain is Tetraspanin-8 (273 aa).

The Cytoplasmic portion of the chain corresponds to 1 to 7 (MARCSNN). A helical membrane pass occupies residues 8 to 28 (LVGILNFLVFLLSIPILAGGI). The Extracellular segment spans residues 29–45 (WLSQKGSTECERFLDKP). The helical transmembrane segment at 46-66 (VIALGVFLMVVAIAGLIGSCC) threads the bilayer. The Cytoplasmic portion of the chain corresponds to 67 to 75 (RVTWLLWVY). A helical transmembrane segment spans residues 76-96 (LFVMFLLILLVFCITVFAFVV). Residues 97–235 (TNKGAGEAIE…NVKSAWKKVA (139 aa)) lie on the Extracellular side of the membrane. A glycan (N-linked (GlcNAc...) asparagine) is linked at N192. Residues 236 to 256 (IVNIVFLVFLIIVYSVGCCAF) form a helical membrane-spanning segment. Topologically, residues 257 to 273 (RNNKRDDSYSRTYGYKP) are cytoplasmic.

The protein belongs to the tetraspanin (TM4SF) family.

It is found in the membrane. In terms of biological role, may be involved in the regulation of cell differentiation. This chain is Tetraspanin-8 (TET8), found in Arabidopsis thaliana (Mouse-ear cress).